Reading from the N-terminus, the 202-residue chain is UPF0056 membrane protein PH0214 (202 aa).

6 helical membrane passes run 5–25 (ILSS…ILLV), 47–67 (IGFI…QDIF), 76–96 (VAGG…GGMV), 104–124 (ILAL…AAIT), 135–155 (IIVS…LMMI), and 174–194 (IIGL…AGGI).

It belongs to the UPF0056 (MarC) family.

Its subcellular location is the cell membrane. In Pyrococcus horikoshii (strain ATCC 700860 / DSM 12428 / JCM 9974 / NBRC 100139 / OT-3), this protein is UPF0056 membrane protein PH0214.